The following is a 369-amino-acid chain: Terpene cyclase DEP1 (369 aa).

The next 8 membrane-spanning stretches (helical) occupy residues 9 to 29 (FFYL…FNGM), 82 to 102 (LLFF…LIES), 118 to 138 (AMVL…LYLV), 157 to 177 (ALLV…VPAW), 190 to 210 (IALF…LASI), 234 to 254 (LVLA…GALI), 298 to 318 (LFSQ…SHLL), and 342 to 362 (LVYL…SFAL).

The protein belongs to the membrane-bound ascI terpene cyclase family.

It is found in the membrane. The protein operates within polyketide biosynthesis. Its function is as follows. Part of the gene cluster that mediates the biosynthesis of depudecin, a highly oxidized eleven-carbon linear polyketide that acts as a histone deacetylase (HDAC) inhibitor and makes a small contribution to pathogenesis. The reducing polyketide synthase DEP5 is the central enzyme in depudecin biosynthesis by yielding the backbone polyketide chain. The monooxygenases DEP2 and DEP4, as well as the uncharacterized protein DEP1, then act as tailoring enzymes to modify the intermediate polyketide chain into depudecin. The protein is Terpene cyclase DEP1 of Alternaria brassicicola (Dark leaf spot agent).